Here is a 763-residue protein sequence, read N- to C-terminus: Hormone-sensitive lipase (763 aa).

The short motif at 350–352 (HGG) is the Involved in the stabilization of the negatively charged intermediate by the formation of the oxyanion hole element. Residue Ser-424 is part of the active site. Ser-552 carries the phosphoserine modification. Residue Ser-554 is modified to Phosphoserine; by AMPK. Ser-595, Ser-627, and Ser-649 each carry phosphoserine. Over residues 616–627 (AREEAEAKEGLS) the composition is skewed to basic and acidic residues. The tract at residues 616-652 (AREEAEAKEGLSAKDGSSRVSNAFPEGFHPRRTSQGA) is disordered. Catalysis depends on residues Asp-692 and His-722.

Belongs to the 'GDXG' lipolytic enzyme family. As to quaternary structure, monomer and homodimer. Interacts with CAVIN1 in the adipocyte cytoplasm. Interacts with PLIN5. In terms of processing, phosphorylation by AMPK reduces its translocation towards the lipid droplets.

Its subcellular location is the cell membrane. The protein localises to the membrane. It localises to the caveola. It is found in the cytoplasm. The protein resides in the cytosol. Its subcellular location is the lipid droplet. The catalysed reaction is a diacylglycerol + H2O = a monoacylglycerol + a fatty acid + H(+). The enzyme catalyses a triacylglycerol + H2O = a diacylglycerol + a fatty acid + H(+). It catalyses the reaction a monoacylglycerol + H2O = glycerol + a fatty acid + H(+). It carries out the reaction Hydrolyzes glycerol monoesters of long-chain fatty acids.. The catalysed reaction is 1,2-di-(9Z-octadecenoyl)-glycerol + (9Z)-octadecenoate + H(+) = 1,2,3-tri-(9Z-octadecenoyl)-glycerol + H2O. The enzyme catalyses 2,3-di-(9Z)-octadecenoyl-sn-glycerol + H2O = 2-(9Z-octadecenoyl)-glycerol + (9Z)-octadecenoate + H(+). It catalyses the reaction cholesteryl (9Z-octadecenoate) + H2O = cholesterol + (9Z)-octadecenoate + H(+). It carries out the reaction 1,2,3-tri-(9Z-octadecenoyl)-glycerol + H2O = di-(9Z)-octadecenoylglycerol + (9Z)-octadecenoate + H(+). The catalysed reaction is all-trans-retinyl hexadecanoate + H2O = all-trans-retinol + hexadecanoate + H(+). The enzyme catalyses 1,2-di-(9Z-octadecenoyl)-glycerol + H2O = (9Z-octadecenoyl)-glycerol + (9Z)-octadecenoate + H(+). It catalyses the reaction 2-(5Z,8Z,11Z,14Z-eicosatetraenoyl)-glycerol + H2O = glycerol + (5Z,8Z,11Z,14Z)-eicosatetraenoate + H(+). It carries out the reaction 1-(9Z-octadecenoyl)-glycerol + H2O = glycerol + (9Z)-octadecenoate + H(+). The catalysed reaction is 2-(9Z-octadecenoyl)-glycerol + H2O = glycerol + (9Z)-octadecenoate + H(+). The enzyme catalyses 1-O-hexadecyl-2-acetyl-sn-glycerol + H2O = 1-O-hexadecyl-sn-glycerol + acetate + H(+). It catalyses the reaction 1,2-di-(9Z-octadecenoyl)-sn-glycerol + H2O = (9Z-octadecenoyl)-glycerol + (9Z)-octadecenoate + H(+). It carries out the reaction 1,3-di-(9Z-octadecenoyl)-glycerol + H2O = 1-(9Z-octadecenoyl)-glycerol + (9Z)-octadecenoate + H(+). The catalysed reaction is 1,2-di-(9Z-octadecenoyl)-glycerol + H2O = 2-(9Z-octadecenoyl)-glycerol + (9Z)-octadecenoate + H(+). It functions in the pathway glycerolipid metabolism; triacylglycerol degradation. Functionally, lipase with broad substrate specificity, catalyzing the hydrolysis of triacylglycerols (TAGs), diacylglycerols (DAGs), monoacylglycerols (MAGs), cholesteryl esters and retinyl esters. Shows a preferential hydrolysis of DAGs over TAGs and MAGs. Preferentially hydrolyzes fatty acid (FA) esters at the sn-3 position of the glycerol backbone in DAGs and FA esters at the sn-1 and sn-2 positions of the glycerol backbone in TAGs. Catalyzes the hydrolysis of 2-arachidonoylglycerol, an endocannabinoid and of 2-acetyl monoalkylglycerol ether, the penultimate precursor of the pathway for de novo synthesis of platelet-activating factor. In adipose tissue and heart, it primarily hydrolyzes stored triglycerides to free fatty acids, while in steroidogenic tissues, it principally converts cholesteryl esters to free cholesterol for steroid hormone production. In Ictidomys tridecemlineatus (Thirteen-lined ground squirrel), this protein is Hormone-sensitive lipase (LIPE).